The sequence spans 143 residues: MALQRTLSIIKPDAVSKNVIGEILTRFEKAGLRVVAAKMVQLSEREAGGFYAEHKERPFFKDLVSFMTSGPVVVQVLEGEDAIAKNRELMGATDPKKADAGTIRADFAVSIDENAVHGSDSEASAAREIAYFFAATEVCERIR.

K11, F59, R87, T93, R104, and N114 together coordinate ATP. Residue H117 is the Pros-phosphohistidine intermediate of the active site.

The protein belongs to the NDK family. As to quaternary structure, homotetramer. Requires Mg(2+) as cofactor.

The protein resides in the cytoplasm. The enzyme catalyses a 2'-deoxyribonucleoside 5'-diphosphate + ATP = a 2'-deoxyribonucleoside 5'-triphosphate + ADP. It catalyses the reaction a ribonucleoside 5'-diphosphate + ATP = a ribonucleoside 5'-triphosphate + ADP. Functionally, major role in the synthesis of nucleoside triphosphates other than ATP. The ATP gamma phosphate is transferred to the NDP beta phosphate via a ping-pong mechanism, using a phosphorylated active-site intermediate. The chain is Nucleoside diphosphate kinase from Pseudomonas aeruginosa (strain UCBPP-PA14).